A 389-amino-acid chain; its full sequence is tRNA (cytosine(72)-C(5))-methyltransferase (389 aa).

The PUA domain maps to 92–167; it reads LPVVVANKYA…LAVEVTLPKF (76 aa). S-adenosyl-L-methionine contacts are provided by residues 209–215, aspartate 233, arginine 238, aspartate 260, aspartate 277, and tyrosine 304; that span reads AAAPGGK. The active-site Nucleophile is the cysteine 327.

It belongs to the class I-like SAM-binding methyltransferase superfamily. RsmB/NOP family.

It carries out the reaction cytidine(72) in tRNA + S-adenosyl-L-methionine = 5-methylcytidine(72) in tRNA + S-adenosyl-L-homocysteine + H(+). The enzyme catalyses cytidine(72) in tRNA(Thr) + S-adenosyl-L-methionine = 5-methylcytidine(72) in tRNA(Thr) + S-adenosyl-L-homocysteine + H(+). The catalysed reaction is cytidine(72) in tRNA(Cys) + S-adenosyl-L-methionine = 5-methylcytidine(72) in tRNA(Cys) + S-adenosyl-L-homocysteine + H(+). Its function is as follows. S-adenosyl-L-methionine-dependent methyltransferase that specifically methylates the C5 position of cytosine 72 in several tRNAs. This modification appears to slightly promote the thermal stability of P.horikoshii tRNAs, but does not affect their amino acid accepting activity. Four elements in the acceptor stems of tRNAs are essential for substrate recognition by this enzyme: the target site C72, the 3'-CCA terminus, U73 or G73, and the second base pair C2:G71. This Pyrococcus horikoshii (strain ATCC 700860 / DSM 12428 / JCM 9974 / NBRC 100139 / OT-3) protein is tRNA (cytosine(72)-C(5))-methyltransferase.